Consider the following 254-residue polypeptide: Coenzyme F420:L-glutamate ligase (254 aa).

Residues 11–14 (IPLI), 40–41 (ST), and Lys-45 contribute to the GTP site. A divalent metal cation is bound at residue Asp-109. GTP is bound at residue Asn-112. A divalent metal cation-binding residues include Asp-150, Thr-151, and Glu-208. 206 to 213 (MGEGAGGI) contributes to the GTP binding site.

This sequence belongs to the CofE family. As to quaternary structure, homodimer. Mg(2+) is required as a cofactor. Mn(2+) serves as cofactor. The cofactor is K(+).

It carries out the reaction oxidized coenzyme F420-0 + GTP + L-glutamate = oxidized coenzyme F420-1 + GDP + phosphate + H(+). It catalyses the reaction oxidized coenzyme F420-1 + GTP + L-glutamate = oxidized coenzyme F420-2 + GDP + phosphate + H(+). The protein operates within cofactor biosynthesis; coenzyme F420 biosynthesis. Its function is as follows. Catalyzes the GTP-dependent successive addition of two or more gamma-linked L-glutamates to the L-lactyl phosphodiester of 7,8-didemethyl-8-hydroxy-5-deazariboflavin (F420-0) to form coenzyme F420-0-glutamyl-glutamate (F420-2) or polyglutamated F420 derivatives. The chain is Coenzyme F420:L-glutamate ligase from Methanosarcina acetivorans (strain ATCC 35395 / DSM 2834 / JCM 12185 / C2A).